We begin with the raw amino-acid sequence, 277 residues long: Probable endonuclease 4 (277 aa).

Zn(2+)-binding residues include His-67, His-107, Glu-141, Asp-173, His-176, His-210, Asp-223, His-225, and Glu-255.

The protein belongs to the AP endonuclease 2 family. The cofactor is Zn(2+).

The enzyme catalyses Endonucleolytic cleavage to 5'-phosphooligonucleotide end-products.. Functionally, endonuclease IV plays a role in DNA repair. It cleaves phosphodiester bonds at apurinic or apyrimidinic (AP) sites, generating a 3'-hydroxyl group and a 5'-terminal sugar phosphate. This chain is Probable endonuclease 4, found in Haloarcula marismortui (strain ATCC 43049 / DSM 3752 / JCM 8966 / VKM B-1809) (Halobacterium marismortui).